Reading from the N-terminus, the 232-residue chain is Uracil phosphoribosyltransferase (232 aa).

Position 38–42 (38–42 (KGLVR)) interacts with GTP. Residues Arg87, Arg112, and 140-148 (DPMIATGST) each bind 5-phospho-alpha-D-ribose 1-diphosphate. Residues Ile204 and 209–211 (GDA) contribute to the uracil site. 5-phospho-alpha-D-ribose 1-diphosphate is bound at residue Asp210.

The protein belongs to the UPRTase family. Mg(2+) serves as cofactor.

The catalysed reaction is UMP + diphosphate = 5-phospho-alpha-D-ribose 1-diphosphate + uracil. It participates in pyrimidine metabolism; UMP biosynthesis via salvage pathway; UMP from uracil: step 1/1. With respect to regulation, allosterically activated by GTP. Its function is as follows. Catalyzes the conversion of uracil and 5-phospho-alpha-D-ribose 1-diphosphate (PRPP) to UMP and diphosphate. This Methanococcus vannielii (strain ATCC 35089 / DSM 1224 / JCM 13029 / OCM 148 / SB) protein is Uracil phosphoribosyltransferase.